The primary structure comprises 206 residues: Putative 3-methyladenine DNA glycosylase (206 aa).

This sequence belongs to the DNA glycosylase MPG family.

This chain is Putative 3-methyladenine DNA glycosylase, found in Staphylococcus carnosus (strain TM300).